A 314-amino-acid chain; its full sequence is Bis(5'-nucleosyl)-tetraphosphatase, symmetrical (314 aa).

The disordered stretch occupies residues 267–314; it reads QVPGNPITHPPKTAQRPRQPRRRQRQRGGDQAQTGPAPTPASTGPAGG. A compositionally biased stretch (low complexity) spans 297 to 314; sequence QAQTGPAPTPASTGPAGG.

Belongs to the Ap4A hydrolase family.

It carries out the reaction P(1),P(4)-bis(5'-adenosyl) tetraphosphate + H2O = 2 ADP + 2 H(+). In terms of biological role, hydrolyzes diadenosine 5',5'''-P1,P4-tetraphosphate to yield ADP. This chain is Bis(5'-nucleosyl)-tetraphosphatase, symmetrical, found in Xanthomonas axonopodis pv. citri (strain 306).